Consider the following 790-residue polypeptide: Penicillin-binding protein 1A (790 aa).

The Cytoplasmic portion of the chain corresponds to 1 to 6 (MYKSLF). Residues 7–27 (FCLKIFAVLILVGCGITAYII) form a helical; Signal-anchor for type II membrane protein membrane-spanning segment. The Periplasmic segment spans residues 28–790 (YHYSRDLPDY…SKEDQSQEIY (763 aa)). The transglycosylase stretch occupies residues 49 to 220 (TRIYSHDGKL…SELNPERNYA (172 aa)). The Proton donor; for transglycosylase activity role is filled by E87. The tract at residues 398-711 (DVIVVEPIKD…SNVVLPIFID (314 aa)) is transpeptidase. Residue S457 is the Acyl-ester intermediate; for transpeptidase activity of the active site.

In the N-terminal section; belongs to the glycosyltransferase 51 family. The protein in the C-terminal section; belongs to the transpeptidase family.

Its subcellular location is the cell inner membrane. It catalyses the reaction [GlcNAc-(1-&gt;4)-Mur2Ac(oyl-L-Ala-gamma-D-Glu-L-Lys-D-Ala-D-Ala)](n)-di-trans,octa-cis-undecaprenyl diphosphate + beta-D-GlcNAc-(1-&gt;4)-Mur2Ac(oyl-L-Ala-gamma-D-Glu-L-Lys-D-Ala-D-Ala)-di-trans,octa-cis-undecaprenyl diphosphate = [GlcNAc-(1-&gt;4)-Mur2Ac(oyl-L-Ala-gamma-D-Glu-L-Lys-D-Ala-D-Ala)](n+1)-di-trans,octa-cis-undecaprenyl diphosphate + di-trans,octa-cis-undecaprenyl diphosphate + H(+). It carries out the reaction Preferential cleavage: (Ac)2-L-Lys-D-Ala-|-D-Ala. Also transpeptidation of peptidyl-alanyl moieties that are N-acyl substituents of D-alanine.. It functions in the pathway cell wall biogenesis; peptidoglycan biosynthesis. In terms of biological role, cell wall formation. Synthesis of cross-linked peptidoglycan from the lipid intermediates. The enzyme has a penicillin-insensitive transglycosylase N-terminal domain (formation of linear glycan strands) and a penicillin-sensitive transpeptidase C-terminal domain (cross-linking of the peptide subunits). The chain is Penicillin-binding protein 1A (mrcA) from Rickettsia felis (strain ATCC VR-1525 / URRWXCal2) (Rickettsia azadi).